We begin with the raw amino-acid sequence, 103 residues long: MSFAPPPDYSKIYLALGCGLGLGFVVYASRVNHLPHVGDNTHNLPHGGQYCDGNKRVLYSGPKSGSSPTNNLWPFITVIALTLAILLTSCPRRRVCIRCSQHH.

Residues 1–8 (MSFAPPPD) lie on the Cytoplasmic side of the membrane. Residues 9–29 (YSKIYLALGCGLGLGFVVYAS) traverse the membrane as a helical segment. Residues 30-70 (RVNHLPHVGDNTHNLPHGGQYCDGNKRVLYSGPKSGSSPTN) lie on the Lumenal side of the membrane. The helical transmembrane segment at 71–91 (NLWPFITVIALTLAILLTSCP) threads the bilayer. Residues 92–103 (RRRVCIRCSQHH) are Cytoplasmic-facing.

This sequence belongs to the Tymovirales TGBp2 protein family.

The protein resides in the host endoplasmic reticulum membrane. In terms of biological role, plays a role in viral cell-to-cell propagation, by facilitating genome transport to neighboring plant cells through plasmosdesmata,. The protein is Movement protein TGB2 of Allium cepa var. aggregatum (Shallot).